We begin with the raw amino-acid sequence, 725 residues long: Eukaryotic translation initiation factor 3 subunit B (725 aa).

The region spanning 46–130 (NCVFIAGIPV…HTFTARSFKD (85 aa)) is the RRM domain. WD repeat units lie at residues 202–240 (RANWTETVFTWSPHGSYLSTIHKQGIILWGGKDYARAHR), 242–280 (AHTNVQYIDFSPCETYLVTYAAPEESNSWGDCEKDSLRI), 354–395 (VNIE…SMQR), 462–504 (PLSE…HAPK), 510–552 (DAGV…AKRT), and 554–594 (VIEH…FTFQ).

The protein belongs to the eIF-3 subunit B family. Component of the eukaryotic translation initiation factor 3 (eIF-3) complex.

Its subcellular location is the cytoplasm. RNA-binding component of the eukaryotic translation initiation factor 3 (eIF-3) complex, which is involved in protein synthesis of a specialized repertoire of mRNAs and, together with other initiation factors, stimulates binding of mRNA and methionyl-tRNAi to the 40S ribosome. The eIF-3 complex specifically targets and initiates translation of a subset of mRNAs involved in cell proliferation. The sequence is that of Eukaryotic translation initiation factor 3 subunit B from Caenorhabditis elegans.